Consider the following 280-residue polypeptide: Phosphatidylserine decarboxylase proenzyme (280 aa).

Catalysis depends on charge relay system; for autoendoproteolytic cleavage activity residues Asp-88, His-144, and Ser-247. The active-site Schiff-base intermediate with substrate; via pyruvic acid; for decarboxylase activity is the Ser-247. Ser-247 is modified (pyruvic acid (Ser); by autocatalysis).

Belongs to the phosphatidylserine decarboxylase family. PSD-B subfamily. Prokaryotic type I sub-subfamily. As to quaternary structure, heterodimer of a large membrane-associated beta subunit and a small pyruvoyl-containing alpha subunit. Pyruvate is required as a cofactor. Is synthesized initially as an inactive proenzyme. Formation of the active enzyme involves a self-maturation process in which the active site pyruvoyl group is generated from an internal serine residue via an autocatalytic post-translational modification. Two non-identical subunits are generated from the proenzyme in this reaction, and the pyruvate is formed at the N-terminus of the alpha chain, which is derived from the carboxyl end of the proenzyme. The autoendoproteolytic cleavage occurs by a canonical serine protease mechanism, in which the side chain hydroxyl group of the serine supplies its oxygen atom to form the C-terminus of the beta chain, while the remainder of the serine residue undergoes an oxidative deamination to produce ammonia and the pyruvoyl prosthetic group on the alpha chain. During this reaction, the Ser that is part of the protease active site of the proenzyme becomes the pyruvoyl prosthetic group, which constitutes an essential element of the active site of the mature decarboxylase.

It localises to the cell membrane. It carries out the reaction a 1,2-diacyl-sn-glycero-3-phospho-L-serine + H(+) = a 1,2-diacyl-sn-glycero-3-phosphoethanolamine + CO2. Its pathway is phospholipid metabolism; phosphatidylethanolamine biosynthesis; phosphatidylethanolamine from CDP-diacylglycerol: step 2/2. In terms of biological role, catalyzes the formation of phosphatidylethanolamine (PtdEtn) from phosphatidylserine (PtdSer). The chain is Phosphatidylserine decarboxylase proenzyme from Stenotrophomonas maltophilia (strain R551-3).